A 2835-amino-acid polypeptide reads, in one-letter code: Vanchrobactin synthetase VabF (2835 aa).

Residues 16-452 (EDQWPLIGTQ…IPPSEKQQIT (437 aa)) are condensation 1. Residues 473–880 (QQTVESKPNE…GRCDHQIKIR (408 aa)) form an adenylation 1 region. The region spanning 988 to 1062 (APITQPEQLL…MMAGQMVPLQ (75 aa)) is the Carrier 1 domain. Residue Ser1023 is modified to O-(pantetheine 4'-phosphoryl)serine. 2 condensation regions span residues 1081–1499 (WFEE…KIQQ) and 1539–1961 (DVLP…EWDL). Residues 1992 to 2394 (QQQRSPHQLA…GRSDDQIKIR (403 aa)) are adenylation 2. Residues 2503–2578 (NAHPGLETQL…KLASLLLDDD (76 aa)) form the Carrier 2 domain. Position 2538 is an O-(pantetheine 4'-phosphoryl)serine (Ser2538). A thioesterase region spans residues 2601–2821 (ALFCVNSASG…APENVRQIGE (221 aa)).

Belongs to the NRP synthetase family. Pantetheine 4'-phosphate is required as a cofactor.

The enzyme catalyses holo-[peptidyl-carrier protein] + L-arginine + ATP = L-arginyl-[peptidyl-carrier protein] + AMP + diphosphate. It carries out the reaction holo-[peptidyl-carrier protein] + L-serine + ATP = L-seryl-[peptidyl-carrier protein] + AMP + diphosphate. It participates in siderophore biosynthesis. Its function is as follows. Involved in the synthesis of the siderophore vanchrobactin. Probably adenylates L-arginine via its first adenylation domain and loads it onto its first peptidyl carrier domain via a thioester linkage to the phosphopanthetheine moiety. In addition, may adenylate L-serine via its second adenylation domain and loads it onto its second peptidyl carrier domain via a thioester linkage to the phosphopanthetheine moiety. The thioesterase domain may release vanchrobactin after condensation of the siderophore components. The chain is Vanchrobactin synthetase VabF from Vibrio anguillarum (Listonella anguillarum).